Reading from the N-terminus, the 602-residue chain is ATP-dependent lipid A-core flippase (602 aa).

The next 5 helical transmembrane spans lie at 28–48 (VGIFLLSIVGFVIFASTQPML), 84–104 (LLIILIAAWQGLGSFLGNYFL), 158–178 (IKVVIREGLTVVFLFAYLLWM), 180–200 (WHLTLVMVAILPVIAVMVSIA), and 268–288 (PMLQLVIYSAMAALMFLVLFL). The ABC transmembrane type-1 domain maps to 32-323 (LLSIVGFVIF…LSEVSSTIQK (292 aa)). Residues 355–591 (LEVRNLSFTY…NGHYARLHAM (237 aa)) form the ABC transporter domain. 389-396 (GRSGSGKS) is a binding site for ATP.

This sequence belongs to the ABC transporter superfamily. Lipid exporter (TC 3.A.1.106) family. Homodimer.

The protein localises to the cell inner membrane. The enzyme catalyses ATP + H2O + lipid A-core oligosaccharideSide 1 = ADP + phosphate + lipid A-core oligosaccharideSide 2.. Involved in lipopolysaccharide (LPS) biosynthesis. Translocates lipid A-core from the inner to the outer leaflet of the inner membrane. Transmembrane domains (TMD) form a pore in the inner membrane and the ATP-binding domain (NBD) is responsible for energy generation. The chain is ATP-dependent lipid A-core flippase from Pseudomonas putida (strain ATCC 47054 / DSM 6125 / CFBP 8728 / NCIMB 11950 / KT2440).